The primary structure comprises 358 residues: GDSL esterase/lipase At2g30220 (358 aa).

The signal sequence occupies residues 1–22 (MYISKTIVFGLFVATLLVSCNA). Asparagine 25 carries an N-linked (GlcNAc...) asparagine glycan. The active-site Nucleophile is serine 40. 2 N-linked (GlcNAc...) asparagine glycosylation sites follow: asparagine 102 and asparagine 324. Residues aspartate 332 and histidine 335 contribute to the active site.

Belongs to the 'GDSL' lipolytic enzyme family.

Its subcellular location is the secreted. The polypeptide is GDSL esterase/lipase At2g30220 (Arabidopsis thaliana (Mouse-ear cress)).